Here is a 352-residue protein sequence, read N- to C-terminus: Homeobox protein Mohawk (352 aa).

The disordered stretch occupies residues 19-53 (GASERERGGRPYSGVLDSPHARPEVGIADGPPLKD). Residues 71-132 (VRHKRQALQD…NARRRLKNTV (62 aa)) constitute a DNA-binding region (homeobox; TALE-type). 2 disordered regions span residues 157–194 (LSVSSDDSCSEGGENPPRTHMNEGGYNTPVHHPVIKSE) and 245–272 (TRQRNHSGSFSSNEFEEELVSPSSSETE).

Belongs to the TALE/IRO homeobox family.

The protein localises to the nucleus. In terms of biological role, may act as a morphogenetic regulator of cell adhesion. The protein is Homeobox protein Mohawk (MKX) of Pongo abelii (Sumatran orangutan).